The primary structure comprises 139 residues: Large ribosomal subunit protein uL22 (139 aa).

The segment at 1–22 (MVSENEKTRRPKRSIQHRQNKD) is disordered. Over residues 9 to 18 (RRPKRSIQHR) the composition is skewed to basic residues.

It belongs to the universal ribosomal protein uL22 family. As to quaternary structure, part of the 50S ribosomal subunit.

This protein binds specifically to 23S rRNA; its binding is stimulated by other ribosomal proteins, e.g. L4, L17, and L20. It is important during the early stages of 50S assembly. It makes multiple contacts with different domains of the 23S rRNA in the assembled 50S subunit and ribosome. Functionally, the globular domain of the protein is located near the polypeptide exit tunnel on the outside of the subunit, while an extended beta-hairpin is found that lines the wall of the exit tunnel in the center of the 70S ribosome. This is Large ribosomal subunit protein uL22 from Pseudothermotoga lettingae (strain ATCC BAA-301 / DSM 14385 / NBRC 107922 / TMO) (Thermotoga lettingae).